The sequence spans 459 residues: DnaJ homolog subfamily A member 1 homolog (459 aa).

One can recognise a J domain in the interval 6–73 (EYYERLGVKP…EKRKMYDSYG (68 aa)). Residues 158-243 (GKLVKISISR…CKGKRVIQGK (86 aa)) form a CR-type zinc finger. Zn(2+)-binding residues include cysteine 171, cysteine 174, cysteine 188, cysteine 191, cysteine 215, cysteine 218, cysteine 231, and cysteine 234. 4 CXXCXGXG motif repeats span residues 171–178 (CKTCKGSG), 188–195 (CPTCNGSR), 215–222 (CHTCHGTG), and 231–238 (CKECKGKR). Positions 405-459 (NTNEQSSHGGAGGAYQQHGGAYGHQKQQQQGFNPADFGAQFGGGGPQQAQQCQQQ) are disordered. Residues 418–435 (AYQQHGGAYGHQKQQQQG) are compositionally biased toward low complexity. Residue cysteine 456 is modified to Cysteine methyl ester. A lipid anchor (S-farnesyl cysteine) is attached at cysteine 456. The propeptide at 457–459 (QQQ) is removed in mature form.

The protein resides in the membrane. Its subcellular location is the cytoplasm. It is found in the microsome. It localises to the mitochondrion. The protein localises to the nucleus. The protein resides in the perinuclear region. In terms of biological role, co-chaperone for Hsp70 family members. Plays a role in protein transport into mitochondria and in the regulation of apoptosis via its role as co-chaperone. In Dictyostelium discoideum (Social amoeba), this protein is DnaJ homolog subfamily A member 1 homolog (dnaja1).